The following is a 794-amino-acid chain: MDELAGGGGGQGMAVPPRPQQGPGGNLSLPPGANGAPGGGGPPAAETAGPPAGPELSRPQQYTIPGILHYIQHEWARFEMERAHWEVERAELQARIAFLQGERKGQENLKKDLVRRIKMLEYALKQERAKYHKLKYGTELNQGDLKMPTFESEETKDAEAPPAQNSQLTWKQGRQLLRQYLQEVGYTDTILDVRSQRVRSLLGLSNSEPNGSIEAKNLEQILNGGESPKQKGQEIKRPSGDVLETFNFLENADDSDEEENDMIEGIPEGKDKLRIHKHKIGNEGLAADLTDDPDTEEALKEFDFLVTAEDGEGAGEARSSGDGTEWDKDDLSPTAEVWDVDQGLMSKLKEQYKKERKGKRGAKRVNRTNLCDMITDLGDDELPHIPSGIINQSRSASTRMTDHEGSRAEEAEPITFPSGGGKSFIMGSDDVLLSVLGLGDLADLTVTNDADYSYDLPANKDALRKTWNPKYTLRSHFDGVRALAFHPVEPVLVTASEDHTLKLWNLQKTVPAKKSASLDVEPIYTFRAHIGPVLSLAISSNGEQCFSGGIDATIQWWNMPSPNVDPYDTYESHVLAGTLVAHTDAVWGLAYSGIKNQLLSCSADGTIRLWNPQEKLPCICTYNGDKEHGIPTSVDFIGCDPAHMVTSFNTGSAIIYDLETSQSLVMLSSQVDSGLQSSNHINRVVSHPTLPVTITAHEDRHIKFFDNKTGKMIHSMVAHLDAVTSLAVDPNGIYLMSGSHDCSIRLWNLDSKTCVQEITAHRKKLDESIYDVAFHPSKAYIASAGADALAKVFV.

Met-1 carries the post-translational modification N-acetylmethionine. The segment covering 1–12 (MDELAGGGGGQG) has biased composition (gly residues). Positions 1 to 59 (MDELAGGGGGQGMAVPPRPQQGPGGNLSLPPGANGAPGGGGPPAAETAGPPAGPELSRP) are disordered. Residues 70–78 (YIQHEWARF) are caveolin-binding. Residues 76–135 (ARFEMERAHWEVERAELQARIAFLQGERKGQENLKKDLVRRIKMLEYALKQERAKYHKLK) are a coiled coil. Thr-149 carries the post-translational modification Phosphothreonine. The interval 164-181 (QNSQLTWKQGRQLLRQYL) is calmodulin-binding. 5 positions are modified to phosphoserine: Ser-200, Ser-212, Ser-227, Ser-255, and Ser-332. Residues 309 to 339 (EDGEGAGEARSSGDGTEWDKDDLSPTAEVWD) are disordered. WD repeat units follow at residues 475-514 (SHFDGVRALAFHPVEPVLVTASEDHTLKLWNLQKTVPAKK), 528-567 (AHIGPVLSLAISSNGEQCFSGGIDATIQWWNMPSPNVDPY), 581-620 (AHTDAVWGLAYSGIKNQLLSCSADGTIRLWNPQEKLPCIC), 676-715 (QSSNHINRVVSHPTLPVTITAHEDRHIKFFDNKTGKMIHS), 718-757 (AHLDAVTSLAVDPNGIYLMSGSHDCSIRLWNLDSKTCVQE), and 764-794 (KLDESIYDVAFHPSKAYIASAGADALAKVFV).

It belongs to the WD repeat striatin family. As to quaternary structure, tetramerizes. Part of the core of STRIPAK complexes composed of PP2A catalytic and scaffolding subunits, the striatins (PP2A regulatory subunits), the striatin-associated proteins MOB4, STRIP1 and STRIP2, PDCD10 and members of the STE20 kinases, such as STK24 and STK26. The STRIPAK complex can be extended by adapter proteins such as SLMAP:SIKE1 or CTTNBP2NL. Interacts with CDC42BPB.

Its subcellular location is the cytoplasm. It is found in the membrane. In terms of biological role, calmodulin-binding scaffolding protein which is the center of the striatin-interacting phosphatase and kinase (STRIPAK) complexes. STRIPAK complexes have critical roles in protein (de)phosphorylation and are regulators of multiple signaling pathways including Hippo, MAPK, nuclear receptor and cytoskeleton remodeling. Different types of STRIPAK complexes are involved in a variety of biological processes such as cell growth, differentiation, apoptosis, metabolism and immune regulation. The protein is Striatin-3 (Strn3) of Rattus norvegicus (Rat).